The chain runs to 310 residues: tRNA dimethylallyltransferase (310 aa).

ATP is bound at residue 15–22; sequence GATASGKT. Residue 17–22 coordinates substrate; sequence TASGKT.

The protein belongs to the IPP transferase family. Monomer. It depends on Mg(2+) as a cofactor.

It carries out the reaction adenosine(37) in tRNA + dimethylallyl diphosphate = N(6)-dimethylallyladenosine(37) in tRNA + diphosphate. In terms of biological role, catalyzes the transfer of a dimethylallyl group onto the adenine at position 37 in tRNAs that read codons beginning with uridine, leading to the formation of N6-(dimethylallyl)adenosine (i(6)A). The protein is tRNA dimethylallyltransferase of Nocardioides sp. (strain ATCC BAA-499 / JS614).